A 718-amino-acid chain; its full sequence is Polyribonucleotide nucleotidyltransferase (718 aa).

The Mg(2+) site is built by D491 and D497. One can recognise a KH domain in the interval 558–617; that stretch reads PRMLTIKINPEKIRDVIGKGGATIRALTEETGTQIDISDDGTIVIASVDEGQAKEAQRRI. Positions 627 to 695 constitute an S1 motif domain; it reads GQVYDGSVLR…EKGRLRLSVK (69 aa).

The protein belongs to the polyribonucleotide nucleotidyltransferase family. Requires Mg(2+) as cofactor.

It is found in the cytoplasm. The enzyme catalyses RNA(n+1) + phosphate = RNA(n) + a ribonucleoside 5'-diphosphate. Involved in mRNA degradation. Catalyzes the phosphorolysis of single-stranded polyribonucleotides processively in the 3'- to 5'-direction. The protein is Polyribonucleotide nucleotidyltransferase of Bordetella avium (strain 197N).